The primary structure comprises 211 residues: Small ribosomal subunit protein uS3 (211 aa).

The 69-residue stretch at Leu-38–Arg-106 folds into the KH type-2 domain.

It belongs to the universal ribosomal protein uS3 family. Part of the 30S ribosomal subunit. Forms a tight complex with proteins S10 and S14.

Its function is as follows. Binds the lower part of the 30S subunit head. Binds mRNA in the 70S ribosome, positioning it for translation. This is Small ribosomal subunit protein uS3 from Geobacter metallireducens (strain ATCC 53774 / DSM 7210 / GS-15).